A 232-amino-acid chain; its full sequence is Anti-sigma-K factor RskA (232 aa).

Topologically, residues 1-90 (MTEHTDFELL…EVRRQSRWRT (90 aa)) are cytoplasmic. Residues 91–111 (AAFASAAAIAVGLGAFGLGVL) traverse the membrane as a helical segment. Residues 112-232 (TRPSPPPTVA…GTILAELPLG (121 aa)) lie on the Extracellular side of the membrane.

This sequence belongs to the anti-sigma-K factor family.

Its subcellular location is the cell membrane. In terms of biological role, an anti-sigma factor for extracytoplasmic function (ECF) sigma factor SigK. ECF sigma factors are held in an inactive form by an anti-sigma factor until released by regulated intramembrane proteolysis (RIP). RIP occurs when an extracytoplasmic signal triggers a concerted proteolytic cascade to transmit information and elicit cellular responses. The membrane-spanning regulatory substrate protein is first cut extracytoplasmically (site-1 protease, S1P), then within the membrane itself (site-2 protease, S2P, Rip1), while cytoplasmic proteases finish degrading the regulatory protein, liberating the sigma factor. This Mycobacterium tuberculosis (strain ATCC 25177 / H37Ra) protein is Anti-sigma-K factor RskA (rskA).